Reading from the N-terminus, the 714-residue chain is K(+)-insensitive pyrophosphate-energized proton pump (714 aa).

Residues 1 to 20 (MRMTVIPIVILCGVLSVVYA) form the signal peptide. A run of 4 helical transmembrane segments spans residues 52–74 (LTRQYLTIAIVGLIVAVLAWYLL), 85–105 (GAVLSGVAGFVGMHVSVRANL), 128–148 (ITGMLVAGLALLGVSIYYFVL), and 166–186 (VSLGFGASLISIFARLGGGIF). Residue Lys188 coordinates substrate. Asp191, Asp195, Asn218, and Asp221 together coordinate Mg(2+). A run of 6 helical transmembrane segments spans residues 238–258 (AVSVVATMVLAAIFFAGTPIL), 263–283 (VYPLAICGACILTSIAGTFFV), 298–318 (GLIATGVFSVAGLAVATYATV), 333–353 (GTNLFFCGLVGLVVTALIVVI), 383–403 (GLAVSLESTALPAIVIVGGII), and 411–431 (LFGTGIAVTAMLGLAGMIVAL). Asp439 serves as a coordination point for Mg(2+). 4 helical membrane-spanning segments follow: residues 470-490 (AVTKGYAIGSAGLGALVLFAA), 522-542 (YVVAGLLFGGLIPYLFGGIAM), 591-611 (VIPSLLPVLAPLVVYFGVLLI), and 618-638 (AFAALGASLLGVIINGLFVAI). Ca(2+)-binding residues include Asp648, Asp680, and Asp684. Lys687 is a substrate binding site. Residues 693 to 713 (AVNPAIKITNIVALLLLAVLA) traverse the membrane as a helical segment.

The protein belongs to the H(+)-translocating pyrophosphatase (TC 3.A.10) family. K(+)-insensitive subfamily. As to quaternary structure, homodimer. It depends on Mg(2+) as a cofactor.

It localises to the acidocalcisome membrane. The enzyme catalyses diphosphate + H2O + H(+)(in) = 2 phosphate + 2 H(+)(out). Its function is as follows. Proton pump that utilizes the energy of pyrophosphate hydrolysis as the driving force for proton movement across the membrane. Generates a proton motive force. The chain is K(+)-insensitive pyrophosphate-energized proton pump from Agrobacterium fabrum (strain C58 / ATCC 33970) (Agrobacterium tumefaciens (strain C58)).